A 336-amino-acid polypeptide reads, in one-letter code: Peroxidase 11 (336 aa).

The signal sequence occupies residues 1-20 (MMRLLFVFFMVHTIFIPCFS). 4 cysteine pairs are disulfide-bonded: Cys-39-Cys-119, Cys-72-Cys-77, Cys-125-Cys-331, and Cys-204-Cys-236. His-70 (proton acceptor) is an active-site residue. Positions 71, 74, 76, 78, and 80 each coordinate Ca(2+). Pro-167 is a substrate binding site. Position 197 (His-197) interacts with heme b. A Ca(2+)-binding site is contributed by Thr-198. Asn-246 carries N-linked (GlcNAc...) asparagine glycosylation. Positions 251, 254, and 259 each coordinate Ca(2+).

This sequence belongs to the peroxidase family. Classical plant (class III) peroxidase subfamily. Requires heme b as cofactor. The cofactor is Ca(2+). As to expression, expressed in roots and stems.

The protein resides in the secreted. It carries out the reaction 2 a phenolic donor + H2O2 = 2 a phenolic radical donor + 2 H2O. In terms of biological role, removal of H(2)O(2), oxidation of toxic reductants, biosynthesis and degradation of lignin, suberization, auxin catabolism, response to environmental stresses such as wounding, pathogen attack and oxidative stress. These functions might be dependent on each isozyme/isoform in each plant tissue. In Arabidopsis thaliana (Mouse-ear cress), this protein is Peroxidase 11 (PER11).